Here is a 219-residue protein sequence, read N- to C-terminus: Orotate phosphoribosyltransferase (219 aa).

A 5-phospho-alpha-D-ribose 1-diphosphate-binding site is contributed by lysine 26. 34–35 (FF) is a binding site for orotate. 5-phospho-alpha-D-ribose 1-diphosphate-binding positions include 72–73 (YK), arginine 98, lysine 99, lysine 102, histidine 104, and 124–132 (DDVITAGTA). Threonine 128 and arginine 156 together coordinate orotate.

The protein belongs to the purine/pyrimidine phosphoribosyltransferase family. PyrE subfamily. As to quaternary structure, homodimer. The cofactor is Mg(2+).

It carries out the reaction orotidine 5'-phosphate + diphosphate = orotate + 5-phospho-alpha-D-ribose 1-diphosphate. It participates in pyrimidine metabolism; UMP biosynthesis via de novo pathway; UMP from orotate: step 1/2. In terms of biological role, catalyzes the transfer of a ribosyl phosphate group from 5-phosphoribose 1-diphosphate to orotate, leading to the formation of orotidine monophosphate (OMP). This chain is Orotate phosphoribosyltransferase, found in Xanthomonas euvesicatoria pv. vesicatoria (strain 85-10) (Xanthomonas campestris pv. vesicatoria).